The primary structure comprises 860 residues: Alanine--tRNA ligase (860 aa).

His-563, His-567, Cys-665, and His-669 together coordinate Zn(2+).

It belongs to the class-II aminoacyl-tRNA synthetase family. It depends on Zn(2+) as a cofactor.

Its subcellular location is the cytoplasm. The enzyme catalyses tRNA(Ala) + L-alanine + ATP = L-alanyl-tRNA(Ala) + AMP + diphosphate. Its function is as follows. Catalyzes the attachment of alanine to tRNA(Ala) in a two-step reaction: alanine is first activated by ATP to form Ala-AMP and then transferred to the acceptor end of tRNA(Ala). Also edits incorrectly charged Ser-tRNA(Ala) and Gly-tRNA(Ala) via its editing domain. This chain is Alanine--tRNA ligase, found in Vibrio cholerae serotype O1 (strain ATCC 39315 / El Tor Inaba N16961).